The sequence spans 692 residues: Acyl-coenzyme A oxidase 2, peroxisomal (692 aa).

The N-terminal 49 residues, 1–49, are a transit peptide targeting the peroxisome; sequence MESRREKNPMTEEESDGLIAARRIQRLSLHLSPSLTPSPSLPLVQTETC. 7 residues coordinate FAD: T186, S192, G225, R365, Q384, G452, and T473. Residue E475 is the Proton acceptor of the active site. Position 477 (D477) interacts with FAD.

The protein belongs to the acyl-CoA oxidase family. Homodimer. Requires FAD as cofactor. In terms of tissue distribution, expressed mainly in flowers and young seedlings. Lower expression in roots, leaves and bracts.

It localises to the peroxisome. The enzyme catalyses a 2,3-saturated acyl-CoA + O2 = a (2E)-enoyl-CoA + H2O2. Functionally, catalyzes the desaturation of long-chain acyl-CoAs to 2-trans-enoyl-CoAs. Active on substrates longer than C14 and mostly with C18-CoA. Activity on long-chain mono-unsaturated substrates is double than with the corresponding saturated substrates. The sequence is that of Acyl-coenzyme A oxidase 2, peroxisomal from Arabidopsis thaliana (Mouse-ear cress).